A 212-amino-acid chain; its full sequence is Thymidylate kinase (212 aa).

10–17 (GLEGAGKT) contacts ATP.

It belongs to the thymidylate kinase family.

It catalyses the reaction dTMP + ATP = dTDP + ADP. Phosphorylation of dTMP to form dTDP in both de novo and salvage pathways of dTTP synthesis. The chain is Thymidylate kinase from Yersinia pseudotuberculosis serotype O:1b (strain IP 31758).